We begin with the raw amino-acid sequence, 252 residues long: Imidazole glycerol phosphate synthase subunit HisF (252 aa).

Residues Asp11 and Asp130 contribute to the active site.

This sequence belongs to the HisA/HisF family. As to quaternary structure, heterodimer of HisH and HisF.

It localises to the cytoplasm. It catalyses the reaction 5-[(5-phospho-1-deoxy-D-ribulos-1-ylimino)methylamino]-1-(5-phospho-beta-D-ribosyl)imidazole-4-carboxamide + L-glutamine = D-erythro-1-(imidazol-4-yl)glycerol 3-phosphate + 5-amino-1-(5-phospho-beta-D-ribosyl)imidazole-4-carboxamide + L-glutamate + H(+). Its pathway is amino-acid biosynthesis; L-histidine biosynthesis; L-histidine from 5-phospho-alpha-D-ribose 1-diphosphate: step 5/9. IGPS catalyzes the conversion of PRFAR and glutamine to IGP, AICAR and glutamate. The HisF subunit catalyzes the cyclization activity that produces IGP and AICAR from PRFAR using the ammonia provided by the HisH subunit. The protein is Imidazole glycerol phosphate synthase subunit HisF of Staphylococcus aureus (strain USA300).